The primary structure comprises 143 residues: Sirohydrochlorin cobaltochelatase (143 aa).

The Proton acceptor role is filled by His-18. His-18 is a Co(2+) binding site. His-18 serves as a coordination point for Ni(2+). Substrate-binding positions include Arg-53 and 78-83 (LAHGVH). A Co(2+)-binding site is contributed by His-83. His-83 serves as a coordination point for Ni(2+).

Belongs to the CbiX family. CbiXS subfamily. Homotetramer; dimer of dimers.

The enzyme catalyses Co-sirohydrochlorin + 2 H(+) = sirohydrochlorin + Co(2+). It carries out the reaction Ni-sirohydrochlorin + 2 H(+) = sirohydrochlorin + Ni(2+). It functions in the pathway cofactor biosynthesis; adenosylcobalamin biosynthesis; cob(II)yrinate a,c-diamide from sirohydrochlorin (anaerobic route): step 1/10. In terms of biological role, catalyzes the insertion of Co(2+) into sirohydrochlorin as part of the anaerobic pathway to cobalamin biosynthesis. Involved in the biosynthesis of the unique nickel-containing tetrapyrrole coenzyme F430, the prosthetic group of methyl-coenzyme M reductase (MCR), which plays a key role in methanogenesis and anaerobic methane oxidation (Potential). Catalyzes the insertion of Ni(2+) into sirohydrochlorin to yield Ni-sirohydrochlorin (Potential). The polypeptide is Sirohydrochlorin cobaltochelatase (Methanothermobacter thermautotrophicus (strain ATCC 29096 / DSM 1053 / JCM 10044 / NBRC 100330 / Delta H) (Methanobacterium thermoautotrophicum)).